A 366-amino-acid polypeptide reads, in one-letter code: Protein BIG GRAIN 1-like B (366 aa).

2 disordered regions span residues 42 to 73 and 129 to 148; these read DSST…DFNR and FERS…EHGS. Over residues 56 to 73 the composition is skewed to basic and acidic residues; that stretch reads QNREDTRVSANRRDDFNR.

Belongs to the BIG GRAIN 1 (BG1) plant protein family.

The protein resides in the cell membrane. In terms of biological role, involved in auxin transport. Regulator of the auxin signaling pathway. This Arabidopsis thaliana (Mouse-ear cress) protein is Protein BIG GRAIN 1-like B.